The sequence spans 877 residues: Probable sulfate permease C3H7.02 (877 aa).

A run of 13 helical transmembrane segments spans residues 133-153 (WLVYDFIAGITVGCVVVPQGM), 161-181 (LPAQYGLYSSFVGVAIYCIFA), 186-206 (VSIGPVAVMSLVTSKVIANVQ), 221-241 (LALLAGAITCGLGLLRLGFII), 243-263 (FIPVPAVAGFTTGSALNIMAG), 292-312 (LPHTKVDAAFGLVSLFILYLV), 329-349 (VFFLTNVLRSAVIIIVGTAIS), 384-404 (LCADLASELPVSVIVLLLEHI), 424-444 (LIAMGATNLIGVFFHAYPATG), 461-481 (LGGIFTAGVVVLALYCLTGAF), 484-504 (IPNAVLSAVIIHSVFDLIIPW), 518-538 (ALIFICAVFVSVFSSIENGIY), and 543-563 (LSAALLLFRIAKPSGSFLGIL). In terms of domain architecture, STAS spans 594–747 (NLTVRDPPAG…SRSIEVGSAA (154 aa)). Disordered regions lie at residues 643–663 (KASDRPWNDPAPRKKKNAPEV) and 793–821 (ADSDTISVSDDKDKKVEGHRPSQDPTFSH). Residues 801–821 (SDDKDKKVEGHRPSQDPTFSH) show a composition bias toward basic and acidic residues.

Belongs to the SLC26A/SulP transporter (TC 2.A.53) family.

Its subcellular location is the membrane. In terms of biological role, high affinity uptake of sulfate into the cell. This chain is Probable sulfate permease C3H7.02, found in Schizosaccharomyces pombe (strain 972 / ATCC 24843) (Fission yeast).